Here is a 108-residue protein sequence, read N- to C-terminus: Transmembrane protein 213 (108 aa).

The N-terminal stretch at 1 to 27 (MKRLHLAPWTSLVLGLAFLSFHPVYLA) is a signal peptide. Residues 28 to 71 (EASSGSNSTSTVHHPENLETLEQCPNVDFCPQAARCCHTGVDEY) lie on the Extracellular side of the membrane. Asparagine 34 carries N-linked (GlcNAc...) asparagine glycosylation. Residues 72–92 (GWIAAAVGWSLLFLTLILLCV) form a helical membrane-spanning segment. The Cytoplasmic portion of the chain corresponds to 93–108 (DKLMKLTPDESKDLQA).

Its subcellular location is the membrane. In Bos taurus (Bovine), this protein is Transmembrane protein 213 (TMEM213).